The sequence spans 453 residues: Acyl-coenzyme A thioesterase 2, mitochondrial (453 aa).

A mitochondrion-targeting transit peptide spans 1–42 (MVASSFAVLRASRLCQWGWKSWTQLSGPPPLSTGGRTTFART). Lysine 83 carries the N6-acetyllysine modification. Residues serine 273, aspartate 365, and histidine 399 each act as charge relay system in the active site. N6-succinyllysine is present on lysine 447.

This sequence belongs to the C/M/P thioester hydrolase family. Monomer. The N-terminus is blocked. As to expression, constitutively expressed in heart and brown fat. Strongly induced in liver, and weakly in kidney, in peroxisome proliferator treated rat.

The protein localises to the mitochondrion matrix. The catalysed reaction is hexadecanoyl-CoA + H2O = hexadecanoate + CoA + H(+). It catalyses the reaction tetradecanoyl-CoA + H2O = tetradecanoate + CoA + H(+). The enzyme catalyses octadecanoyl-CoA + H2O = octadecanoate + CoA + H(+). It carries out the reaction eicosanoyl-CoA + H2O = eicosanoate + CoA + H(+). The catalysed reaction is decanoyl-CoA + H2O = decanoate + CoA + H(+). It catalyses the reaction dodecanoyl-CoA + H2O = dodecanoate + CoA + H(+). The enzyme catalyses (9Z)-octadecenoyl-CoA + H2O = (9Z)-octadecenoate + CoA + H(+). It carries out the reaction (9Z)-hexadecenoyl-CoA + H2O = (9Z)-hexadecenoate + CoA + H(+). The catalysed reaction is (9E)-octadecenoyl-CoA + H2O = (9E)-octadecenoate + CoA + H(+). It catalyses the reaction (9Z,12Z)-octadecadienoyl-CoA + H2O = (9Z,12Z)-octadecadienoate + CoA + H(+). The protein operates within lipid metabolism; fatty acid metabolism. Functionally, catalyzes the hydrolysis of acyl-CoAs into free fatty acids and coenzyme A (CoASH), regulating their respective intracellular levels. Displays higher activity toward long chain acyl CoAs (C14-C20). The enzyme is involved in enhancing the hepatic fatty acid oxidation in mitochondria. In Rattus norvegicus (Rat), this protein is Acyl-coenzyme A thioesterase 2, mitochondrial (Acot2).